Reading from the N-terminus, the 227-residue chain is Orotidine 5'-phosphate decarboxylase (227 aa).

Substrate-binding positions include Asp12, Lys34, 61–70, Thr117, Arg178, Gln187, Gly207, and Arg208; that span reads DLKLHDIPNT. The active-site Proton donor is the Lys63.

The protein belongs to the OMP decarboxylase family. Type 1 subfamily. As to quaternary structure, homodimer.

It carries out the reaction orotidine 5'-phosphate + H(+) = UMP + CO2. It functions in the pathway pyrimidine metabolism; UMP biosynthesis via de novo pathway; UMP from orotate: step 2/2. Catalyzes the decarboxylation of orotidine 5'-monophosphate (OMP) to uridine 5'-monophosphate (UMP). The chain is Orotidine 5'-phosphate decarboxylase from Anaeromyxobacter dehalogenans (strain 2CP-1 / ATCC BAA-258).